Here is a 36-residue protein sequence, read N- to C-terminus: Toxin Bcg III 29.21 (36 aa).

Cys-6 and Cys-31 form a disulfide bridge.

It is found in the secreted. The protein resides in the nematocyst. In Bunodosoma cangicum (Sea anemone), this protein is Toxin Bcg III 29.21.